The primary structure comprises 332 residues: SLAM family member 6 (332 aa).

The signal sequence occupies residues 1–21; it reads MLWLFQSLLFVFCFGPGNVVS. The Extracellular segment spans residues 22-226; it reads QSSLTPLMVN…VKIQYTDTKM (205 aa). An Ig-like V-type domain is found at 35–120; the sequence is GESVTLPLEF…ISTKTSAKLS (86 aa). N-linked (GlcNAc...) asparagine glycans are attached at residues Asn-58, Asn-87, Asn-137, Asn-144, Asn-161, Asn-178, and Asn-203. The Ig-like C2-type domain occupies 132–209; it reads NIQVTNHSQL…AVSNLSFSVS (78 aa). 2 cysteine pairs are disulfide-bonded: Cys-147–Cys-214 and Cys-153–Cys-195. Residues 227–247 traverse the membrane as a helical segment; the sequence is ILFMVSGICIVFGFIILLLLV. Topologically, residues 248 to 331 are cytoplasmic; it reads LRKRRDSLSL…FSRATALDNV (84 aa). Tyr-274 is modified (phosphotyrosine). Ser-278 is subject to Phosphoserine. Short sequence motifs (ITSM) lie at residues 283–288 and 307–312; these read TVYASV and TIYSTI. Position 309 is a phosphotyrosine (Tyr-309).

In terms of assembly, homodimer. Interacts with PTN6. Interacts (phosphorylated) with PTN11. Interacts (phosphorylated on tyrosine residues) with SH2D1A/SAP and SH2D1B/EAT2; SH2D1A and SH2D1B can associate with the same SLAMF6 molecule; interaction with SH2D1B is mediated by ITSM 2. Phosphorylation in NK cells upon engagment by SLAMF6-expressing target cells is leading to receptor activation. Expressed by all (resting and activated) natural killer cells (NK), T- and B-lymphocytes. Increased surface expression on T-cells of systemic lupus erythematosus (SLE) patients.

The protein localises to the cell membrane. Functionally, self-ligand receptor of the signaling lymphocytic activation molecule (SLAM) family. SLAM receptors triggered by homo- or heterotypic cell-cell interactions are modulating the activation and differentiation of a wide variety of immune cells and thus are involved in the regulation and interconnection of both innate and adaptive immune response. Activities are controlled by presence or absence of small cytoplasmic adapter proteins, SH2D1A/SAP and/or SH2D1B/EAT-2. Triggers cytolytic activity only in natural killer cells (NK) expressing high surface densities of natural cytotoxicity receptors. Positive signaling in NK cells implicates phosphorylation of VAV1. NK cell activation seems to depend on SH2D1B and not on SH2D1A. In conjunction with SLAMF1 controls the transition between positive selection and the subsequent expansion and differentiation of the thymocytic natural killer T (NKT) cell lineage. Promotes T-cell differentiation into a helper T-cell Th17 phenotype leading to increased IL-17 secretion; the costimulatory activity requires SH2D1A. Promotes recruitment of RORC to the IL-17 promoter. In conjunction with SLAMF1 and CD84/SLAMF5 may be a negative regulator of the humoral immune response. In the absence of SH2D1A/SAP can transmit negative signals to CD4(+) T-cells and NKT cells. Negatively regulates germinal center formation by inhibiting T-cell:B-cell adhesion; the function probably implicates increased association with PTPN6/SHP-1 via ITSMs in absence of SH2D1A/SAP. However, reported to be involved in maintaining B-cell tolerance in germinal centers and in preventing autoimmunity. This is SLAM family member 6 (SLAMF6) from Homo sapiens (Human).